The primary structure comprises 1827 residues: MTSLAERAAQLSPNARAALARELVRAGTTFPTDICEPVAVVGIGCRFPGNVTGPESFWQLLADGVDTIEQVPPDRWDADAFYDPDPSASGRMTTKWGGFVSDVDAFDADFFGITPREAVAMDPQHRMLLEVAWEALEHAGIPPDSLSGTRTGVMMGLSSWDYTIVNIERRADIDAYLSTGTPHCAAVGRIAYLLGLRGPAVAVDTACSSSLVAIHLACQSLRLRETDVALAGGVQLTLSPFTAIALSKWSALSPTGRCNSFDANADGFVRGEGCGVVVLKRLADAVRDQDRVLAVVRGSATNSDGRSNGMTAPNALAQRDVITSALKLADVTPDSVNYVETHGTGTVLGDPIEFESLAATYGLGKGQGESPCALGSVKTNIGHLEAAAGVAGFIKAVLAVQRGHIPRNLHFTRWNPAIDASATRLFVPTESAPWPAAAGPRRAAVSSFGLSGTNAHVVVEQAPDTAVAAAGGMPYVSALNVSGKTAARVASAAAVLADWMSGPGAAAPLADVAHTLNRHRARHAKFATVIARDRAEAIAGLRALAAGQPRVGVVDCDQHAGGPGRVFVYSGQGSQWASMGQQLLANEPAFAKAVAELDPIFVDQVGFSLQQTLIDGDEVVGIDRIQPVLVGMQLALTELWRSYGVIPDAVIGHSMGEVSAAVVAGALTPEQGLRVITTRSRLMARLSGQGAMALLELDADAAEALIAGYPQVTLAVHASPRQTVIAGPPEQVDTVIAAVATQNRLARRVEVDVASHHPIIDPILPELRSALADLTPQPPSIPIISTTYESAQPVADADYWSANLRNPVRFHQAVTAAGVDHNTFIEISPHPVLTHALTDTLDPDGSHTVMSTMNRELDQTLYFHAQLAAVGVAASEHTTGRLVDLPPTPWHHQRFWVTDRSAMSELAATHPLLGAHIEMPRNGDHVWQTDVGTEVCPWLADHKVFGQPIMPAAGFAEIALAAASEALGTAADAVAPNIVINQFEVEQMLPLDGHTPLTTQLIRGGDSQIRVEIYSRTRGGEFCRHATAKVEQSPRECAHAHPEAQGPATGTTVSPADFYALLRQTGQHHGPAFAALSRIVRLADGSAETEISIPDEAPRHPGYRLHPVVLDAALQSVGAAIPDGEIAGSAEASYLPVSFETIRVYRDIGRHVRCRAHLTNLDGGTGKMGRIVLINDAGHIAAEVDGIYLRRVERRAVPLPLEQKIFDAEWTESPIAAVPAPEPAAETTRGSWLVLADATVDAPGKAQAKSMADDFVQQWRSPMRRVHTADIHDESAVLAAFAETAGDPEHPPVGVVVFVGGASSRLDDELAAARDTVWSITTVVRAVVGTWHGRSPRLWLVTGGGLSVADDEPGTPAAASLKGLVRVLAFEHPDMRTTLVDLDITQDPLTALSAELRNAGSGSRHDDVIAWRGERRFVERLSRATIDVSKGHPVVRQGASYVVTGGLGGLGLVVARWLVDRGAGRVVLGGRSDPTDEQCNVLAELQTRAEIVVVRGDVASPGVAEKLIETARQSGGQLRGVVHAAAVIEDSLVFSMSRDNLERVWAPKATGALRMHEATADCELDWWLGFSSAASLLGSPGQAAYACASAWLDALVGWRRASGLPAAVINWGPWSEVGVAQALVGSVLDTISVAEGIEALDSLLAADRIRTGVARLRADRALVAFPEIRSISYFTQVVEELDSAGDLGDWGGPDALADLDPGEARRAVTERMCARIAAVMGYTDQSTVEPAVPLDKPLTELGLDSLMAVRIRNGARADFGVEPPVALILQGASLHDLTADLMRQLGLNDPDPALNNADTIRDRARQRAAARHGAAMRRRPKPEVQGG.

The Ketosynthase family 3 (KS3) domain occupies 35-461 (CEPVAVVGIG…GTNAHVVVEQ (427 aa)). Residues cysteine 207, histidine 342, and histidine 383 each act as for beta-ketoacyl synthase activity in the active site. The interval 566-876 (VFVYSGQGSQ…LAAVGVAASE (311 aa)) is acyltransferase. The For malonyltransferase activity role is filled by serine 654. An N-terminal hotdog fold region spans residues 910 to 1037 (HPLLGAHIEM…AKVEQSPREC (128 aa)). The segment at 910 to 1076 (HPLLGAHIEM…QHHGPAFAAL (167 aa)) is dehydratase. The 289-residue stretch at 910 to 1198 (HPLLGAHIEM…LRRVERRAVP (289 aa)) folds into the PKS/mFAS DH domain. The Proton acceptor; for dehydratase activity role is filled by histidine 942. The C-terminal hotdog fold stretch occupies residues 1050–1198 (GTTVSPADFY…LRRVERRAVP (149 aa)). Catalysis depends on aspartate 1111, which acts as the Proton donor; for dehydratase activity. The segment at 1439–1617 (ASYVVTGGLG…VINWGPWSEV (179 aa)) is beta-ketoacyl reductase. NADP(+) is bound at residue 1440-1485 (SYVVTGGLGGLGLVVARWLVDRGAGRVVLGGRSDPTDEQCNVLAEL). The region spanning 1706–1785 (RAVTERMCAR…DLTADLMRQL (80 aa)) is the Carrier domain. Serine 1745 bears the O-(pantetheine 4'-phosphoryl)serine mark. Over residues 1807–1820 (RAAARHGAAMRRRP) the composition is skewed to basic residues. Positions 1807–1827 (RAAARHGAAMRRRPKPEVQGG) are disordered.

NADP(+) serves as cofactor. Pantetheine 4'-phosphate is required as a cofactor.

It carries out the reaction icosanoyl-[(phenol)carboxyphthiodiolenone synthase] + 2 (S)-methylmalonyl-CoA + 3 malonyl-CoA + 5 NADPH + 10 H(+) = C32-carboxyphthiodiolenone-[(phenol)carboxyphthiodiolenone synthase] + 5 CO2 + 5 NADP(+) + 5 CoA + 2 H2O. It catalyses the reaction docosanoyl-[(phenol)carboxyphthiodiolenone synthase] + 2 (S)-methylmalonyl-CoA + 3 malonyl-CoA + 5 NADPH + 10 H(+) = C34-carboxyphthiodiolenone-[(phenol)carboxyphthiodiolenone synthase] + 5 CO2 + 5 NADP(+) + 5 CoA + 2 H2O. The catalysed reaction is 17-(4-hydroxyphenyl)heptadecanoyl-[(phenol)carboxyphthiodiolenone synthase] + 2 (S)-methylmalonyl-CoA + 3 malonyl-CoA + 5 NADPH + 10 H(+) = C35-(phenol)carboxyphthiodiolenone-[(phenol)carboxyphthiodiolenone synthase] + 5 CO2 + 5 NADP(+) + 5 CoA + 2 H2O. The enzyme catalyses 19-(4-hydroxyphenyl)nonadecanoyl-[(phenol)carboxyphthiodiolenone synthase] + 2 (S)-methylmalonyl-CoA + 3 malonyl-CoA + 5 NADPH + 10 H(+) = C37-(phenol)carboxyphthiodiolenone-[(phenol)carboxyphthiodiolenone synthase] + 5 CO2 + 5 NADP(+) + 5 CoA + 2 H2O. It participates in lipid metabolism; fatty acid biosynthesis. Functionally, part of the PpsABCDE complex involved in the biosynthesis of the lipid core common to phthiocerols and phenolphthiocerols by successive additions of malonyl-CoA or methylmalonyl-CoA extender units. PpsA can accept as substrate the activated forms of either icosanoyl (C20), docosanoyl (C22) or lignoceroyl (C24) groups from FadD26, or a (4-hydroxyphenyl)-C17 or (4-hydroxyphenyl)-C19 fatty acyl from FadD29. PpsA initiates the biosynthesis and extends its substrate using a malonyl-CoA extender unit. The PpsB and PpsC proteins add the second and third malonyl-CoA extender units. PpsD adds an (R)-methylmalonyl unit and PpsE adds a second (R)-methylmalonyl unit. The incorporation of the methylmalonyl units results in formation of two branched methyl groups in the elongated product. The chain is Phenolphthiocerol/phthiocerol polyketide synthase subunit C (ppsD) from Mycobacterium tuberculosis (strain CDC 1551 / Oshkosh).